A 153-amino-acid polypeptide reads, in one-letter code: Transcription antitermination protein NusB (153 aa).

Belongs to the NusB family.

In terms of biological role, involved in transcription antitermination. Required for transcription of ribosomal RNA (rRNA) genes. Binds specifically to the boxA antiterminator sequence of the ribosomal RNA (rrn) operons. This chain is Transcription antitermination protein NusB, found in Clostridium tetani (strain Massachusetts / E88).